The following is a 124-amino-acid chain: MSGVVKRATRVAERLREDLSNLLRDLRDPRIAGVLVSRVEITDDLQSAKVHVRHEFGAEDAAARRALLKGLEAASGRLRRDVARTMGLRVVPTLRFFYDEGPDAERRIEELLREIKDGSSGERS.

This sequence belongs to the RbfA family. In terms of assembly, monomer. Binds 30S ribosomal subunits, but not 50S ribosomal subunits or 70S ribosomes.

Its subcellular location is the cytoplasm. Its function is as follows. One of several proteins that assist in the late maturation steps of the functional core of the 30S ribosomal subunit. Associates with free 30S ribosomal subunits (but not with 30S subunits that are part of 70S ribosomes or polysomes). Required for efficient processing of 16S rRNA. May interact with the 5'-terminal helix region of 16S rRNA. The polypeptide is Ribosome-binding factor A (Sorangium cellulosum (strain So ce56) (Polyangium cellulosum (strain So ce56))).